A 214-amino-acid chain; its full sequence is A-type ATP synthase subunit D (214 aa).

This sequence belongs to the V-ATPase D subunit family. In terms of assembly, has multiple subunits with at least A(3), B(3), C, D, E, F, H, I and proteolipid K(x).

It is found in the cell membrane. Its function is as follows. Component of the A-type ATP synthase that produces ATP from ADP in the presence of a proton gradient across the membrane. This chain is A-type ATP synthase subunit D, found in Thermococcus gammatolerans (strain DSM 15229 / JCM 11827 / EJ3).